The primary structure comprises 242 residues: Uridylate kinase (242 aa).

15 to 18 is a binding site for ATP; the sequence is KLSG. An involved in allosteric activation by GTP region spans residues 23 to 28; it reads GDEGFG. Residue glycine 57 coordinates UMP. Residues glycine 58 and arginine 62 each coordinate ATP. UMP-binding positions include aspartate 77 and 138–145; that span reads TGNPFCTT. ATP-binding residues include threonine 165, tyrosine 171, and aspartate 174.

It belongs to the UMP kinase family. As to quaternary structure, homohexamer.

The protein localises to the cytoplasm. The catalysed reaction is UMP + ATP = UDP + ADP. The protein operates within pyrimidine metabolism; CTP biosynthesis via de novo pathway; UDP from UMP (UMPK route): step 1/1. Its activity is regulated as follows. Allosterically activated by GTP. Inhibited by UTP. Its function is as follows. Catalyzes the reversible phosphorylation of UMP to UDP. The polypeptide is Uridylate kinase (Shewanella sp. (strain ANA-3)).